The chain runs to 189 residues: Phosphoheptose isomerase (189 aa).

One can recognise an SIS domain in the interval 34-189; the sequence is AVETLKNGNK…CQIIDNELSH (156 aa). A substrate-binding site is contributed by 49–51; sequence NGG. Zn(2+) contacts are provided by histidine 58 and glutamate 62. Substrate contacts are provided by residues glutamate 62, 91-92, 117-119, serine 122, and glutamine 169; these read ND and STS. Zn(2+) contacts are provided by glutamine 169 and histidine 177.

It belongs to the SIS family. GmhA subfamily. In terms of assembly, homotetramer. The cofactor is Zn(2+).

It localises to the cytoplasm. It catalyses the reaction 2 D-sedoheptulose 7-phosphate = D-glycero-alpha-D-manno-heptose 7-phosphate + D-glycero-beta-D-manno-heptose 7-phosphate. It functions in the pathway carbohydrate biosynthesis; D-glycero-D-manno-heptose 7-phosphate biosynthesis; D-glycero-alpha-D-manno-heptose 7-phosphate and D-glycero-beta-D-manno-heptose 7-phosphate from sedoheptulose 7-phosphate: step 1/1. Its function is as follows. Catalyzes the isomerization of sedoheptulose 7-phosphate in D-glycero-D-manno-heptose 7-phosphate. In Aliarcobacter butzleri (strain RM4018) (Arcobacter butzleri), this protein is Phosphoheptose isomerase.